Here is a 300-residue protein sequence, read N- to C-terminus: Small ribosomal subunit protein uS4m (300 aa).

An S4 RNA-binding domain is found at K146–K209.

This sequence belongs to the universal ribosomal protein uS4 family.

The protein resides in the mitochondrion. This chain is Small ribosomal subunit protein uS4m (mrps4), found in Dictyostelium discoideum (Social amoeba).